The sequence spans 196 residues: Protein GrpE (196 aa).

Residues 1–40 are disordered; the sequence is MSSKEQKTPEGQAPEEIIMDQHEEVEAVEPNDSAEQVDPR.

Belongs to the GrpE family. In terms of assembly, homodimer.

The protein localises to the cytoplasm. Participates actively in the response to hyperosmotic and heat shock by preventing the aggregation of stress-denatured proteins, in association with DnaK and GrpE. It is the nucleotide exchange factor for DnaK and may function as a thermosensor. Unfolded proteins bind initially to DnaJ; upon interaction with the DnaJ-bound protein, DnaK hydrolyzes its bound ATP, resulting in the formation of a stable complex. GrpE releases ADP from DnaK; ATP binding to DnaK triggers the release of the substrate protein, thus completing the reaction cycle. Several rounds of ATP-dependent interactions between DnaJ, DnaK and GrpE are required for fully efficient folding. This is Protein GrpE from Salmonella gallinarum (strain 287/91 / NCTC 13346).